A 174-amino-acid chain; its full sequence is Ribosome maturation factor RimM (174 aa).

In terms of domain architecture, PRC barrel spans 97–171 (EGYYYDFDII…RMVIDPIPGL (75 aa)).

This sequence belongs to the RimM family. As to quaternary structure, binds ribosomal protein uS19.

It is found in the cytoplasm. Functionally, an accessory protein needed during the final step in the assembly of 30S ribosomal subunit, possibly for assembly of the head region. Essential for efficient processing of 16S rRNA. May be needed both before and after RbfA during the maturation of 16S rRNA. It has affinity for free ribosomal 30S subunits but not for 70S ribosomes. The chain is Ribosome maturation factor RimM from Symbiobacterium thermophilum (strain DSM 24528 / JCM 14929 / IAM 14863 / T).